The sequence spans 334 residues: Protein U17/U16 (334 aa).

This sequence belongs to the herpesviridae US22 family. In terms of processing, isoform 1 is not glycosylated.

Functionally, isoform 3 can transactivate the human immunodeficiency virus type 1 promoter. The sequence is that of Protein U17/U16 (U17/U16) from Homo sapiens (Human).